Here is a 647-residue protein sequence, read N- to C-terminus: DNA mismatch repair protein MutL (647 aa).

2 disordered regions span residues 356 to 391 and 407 to 428; these read EGSQ…SSIS and PRPQ…EALP. Polar residues predominate over residues 413-423; the sequence is LRPQYQGSVTS.

This sequence belongs to the DNA mismatch repair MutL/HexB family.

Functionally, this protein is involved in the repair of mismatches in DNA. It is required for dam-dependent methyl-directed DNA mismatch repair. May act as a 'molecular matchmaker', a protein that promotes the formation of a stable complex between two or more DNA-binding proteins in an ATP-dependent manner without itself being part of a final effector complex. This chain is DNA mismatch repair protein MutL, found in Citrifermentans bemidjiense (strain ATCC BAA-1014 / DSM 16622 / JCM 12645 / Bem) (Geobacter bemidjiensis).